The chain runs to 140 residues: Nucleoside diphosphate kinase (140 aa).

Positions 11, 59, 87, 93, 104, and 114 each coordinate ATP. Histidine 117 (pros-phosphohistidine intermediate) is an active-site residue.

Belongs to the NDK family. As to quaternary structure, homotetramer. Mg(2+) is required as a cofactor.

The protein localises to the cytoplasm. The enzyme catalyses a 2'-deoxyribonucleoside 5'-diphosphate + ATP = a 2'-deoxyribonucleoside 5'-triphosphate + ADP. It carries out the reaction a ribonucleoside 5'-diphosphate + ATP = a ribonucleoside 5'-triphosphate + ADP. Functionally, major role in the synthesis of nucleoside triphosphates other than ATP. The ATP gamma phosphate is transferred to the NDP beta phosphate via a ping-pong mechanism, using a phosphorylated active-site intermediate. The sequence is that of Nucleoside diphosphate kinase from Rhizobium johnstonii (strain DSM 114642 / LMG 32736 / 3841) (Rhizobium leguminosarum bv. viciae).